Reading from the N-terminus, the 433-residue chain is MSDLTDIQEEITRHEQQLVVARQKLKDAERAVEVDPDDVNKNTLQARQQTVSALEDKLADYKRRMADAVSRKKMDTKPTDPTGIEPDDHLKERSSLRYGNVLDVNAIDIEEPSGQTADWYTIGVYVIGFTIPIILKALYMLSTRGRQTVKENKGTRIRFKDDTSFEDINGIRRPKHLYVSMPTAQSTMKAEELTPGRFRTIVCGLFPTQIQVRNIMSPVMGVIGFSFFVKDWPERIRDFMEKECPFIKPEVKPGTPAQEIEFLKRNRVYFMTRQDVLDKNHVADIDKLIDYAASGDPTSPDDIESPNAPWVFACAPDRCPPTCIYVVGMAELGAFFSILQDMRNTIMASKTVGTAEEKLKKKSSFYQSYLRRTQSMGIQLDQRIILLYMLEWGKEMVDHFHLGDDMDPELRGLAQSLIDQKVKEISNQEPLKI.

The tract at residues 1-50 (MSDLTDIQEEITRHEQQLVVARQKLKDAERAVEVDPDDVNKNTLQARQQT) is rdRP binding. Homomultimerization regions lie at residues 1–79 (MSDL…TKPT) and 100–125 (NVLDVNAIDIEEPSGQTADWYTIGVY). Residues 1-100 (MSDLTDIQEE…KERSSLRYGN (100 aa)) form a chaperone activity region. Positions 1–175 (MSDLTDIQEE…EDINGIRRPK (175 aa)) are viral panhandle binding. Residues 4–71 (LTDIQEEITR…KRRMADAVSR (68 aa)) adopt a coiled-coil conformation. Over residues 67–78 (DAVSRKKMDTKP) the composition is skewed to basic and acidic residues. The disordered stretch occupies residues 67 to 92 (DAVSRKKMDTKPTDPTGIEPDDHLKE). The tract at residues 80–248 (DPTGIEPDDH…FMEKECPFIK (169 aa)) is interaction with glycoprotein N. Residues 150–175 (KENKGTRIRFKDDTSFEDINGIRRPK) form an interaction with host RPS19 region. Residues 175 to 217 (KHLYVSMPTAQSTMKAEELTPGRFRTIVCGLFPTQIQVRNIMS) form a viral RNA-binding region. Residues 178–181 (YVSM) carry the YxxL motif. An interaction with host UBE2I/UBC9 region spans residues 188–191 (MKAE). The interval 377 to 425 (GIQLDQRIILLYMLEWGKEMVDHFHLGDDMDPELRGLAQSLIDQKVKEI) is homomultimerization. Residues 377-433 (GIQLDQRIILLYMLEWGKEMVDHFHLGDDMDPELRGLAQSLIDQKVKEISNQEPLKI) form an interaction with host DAXX region.

Belongs to the hantavirus nucleocapsid protein family. Homotrimer. Homomultimer. Homomultimerizes and binds to viral genomic RNA to form the nucleocapsid. Interacts with host MAP1LC3B; this interaction participates to the protection of Gn from virus-triggered autophagy. Interacts with host SNAP29; this interaction participates to the protection of glycoprotein N from virus-triggered autophagy. Interacts (via N-terminus) with host RPS19; this interaction probably mediates the loading of the 40S ribosomal subunit on viral capped mRNA during N-mediated translation initiation. Interacts with the viral RdRp. Interacts with host SUMO1 (via N-terminus). Interacts with host DAXX. Interacts with the viral glycoprotein N (via C-terminus). Interacts with the viral glycoprotein C (via C-terminus).

It localises to the virion. It is found in the host cytoplasm. Its subcellular location is the host perinuclear region. The protein resides in the host Golgi apparatus. The protein localises to the host cis-Golgi network. Functionally, encapsidates the genome protecting it from nucleases. The encapsidated genomic RNA is termed the nucleocapsid (NC) and serves as template for transcription and replication. The nucleocapsid has a left-handed helical structure. As a trimer, specifically binds and acts as a chaperone to unwind the panhandle structure formed by the viral RNA (vRNA) termini. Involved in the transcription and replication initiation of vRNA by mediating primer annealing. Plays a role in cap snatching by sequestering capped RNAs in P bodies for use by the viral RdRp during transcription initiation. Substitutes for the cellular cap-binding complex (eIF4F) to preferentially facilitate the translation of capped mRNAs. Initiates the translation by specifically binding to the cap and 40S ribosomal subunit. Prevents the viral glycoprotein N (Gn) from autophagy-dependent breakdown maybe by blocking autophagosome formation. Inhibits host EIF2AK2/PKR dimerization to prevent PKR-induced translational shutdown in cells and thus the activation of the antiviral state. Also displays sequence-unspecific DNA endonuclease activity. This Homo sapiens (Human) protein is Nucleoprotein (N).